Reading from the N-terminus, the 314-residue chain is Ribosomal protein L11 methyltransferase (314 aa).

S-adenosyl-L-methionine-binding residues include Thr163, Gly184, Asp206, and Asn248.

The protein belongs to the methyltransferase superfamily. PrmA family.

It localises to the cytoplasm. The enzyme catalyses L-lysyl-[protein] + 3 S-adenosyl-L-methionine = N(6),N(6),N(6)-trimethyl-L-lysyl-[protein] + 3 S-adenosyl-L-homocysteine + 3 H(+). In terms of biological role, methylates ribosomal protein L11. The protein is Ribosomal protein L11 methyltransferase of Lactobacillus delbrueckii subsp. bulgaricus (strain ATCC BAA-365 / Lb-18).